The chain runs to 183 residues: Ribulose bisphosphate carboxylase small subunit, chloroplastic 5 (183 aa).

The N-terminal 42 residues, 1–42 (MAAAMMNKSVLLNKQCGKPAAVPKVVMSKGGFARTSAVNKNR), are a transit peptide targeting the chloroplast.

This sequence belongs to the RuBisCO small chain family. In terms of assembly, heterohexadecamer of 8 large and 8 small subunits.

The protein resides in the plastid. Its subcellular location is the chloroplast. RuBisCO catalyzes two reactions: the carboxylation of D-ribulose 1,5-bisphosphate, the primary event in carbon dioxide fixation, as well as the oxidative fragmentation of the pentose substrate. Both reactions occur simultaneously and in competition at the same active site. Although the small subunit is not catalytic it is essential for maximal activity. The protein is Ribulose bisphosphate carboxylase small subunit, chloroplastic 5 of Acetabularia acetabulum (Mermaid's wine glass).